The primary structure comprises 223 residues: UPF0173 metal-dependent hydrolase TV0864 (223 aa).

This sequence belongs to the UPF0173 family.

In Thermoplasma volcanium (strain ATCC 51530 / DSM 4299 / JCM 9571 / NBRC 15438 / GSS1), this protein is UPF0173 metal-dependent hydrolase TV0864.